A 141-amino-acid chain; its full sequence is Large ribosomal subunit protein uL11 (141 aa).

This sequence belongs to the universal ribosomal protein uL11 family. As to quaternary structure, part of the ribosomal stalk of the 50S ribosomal subunit. Interacts with L10 and the large rRNA to form the base of the stalk. L10 forms an elongated spine to which L12 dimers bind in a sequential fashion forming a multimeric L10(L12)X complex. One or more lysine residues are methylated.

Functionally, forms part of the ribosomal stalk which helps the ribosome interact with GTP-bound translation factors. This Petrotoga mobilis (strain DSM 10674 / SJ95) protein is Large ribosomal subunit protein uL11.